Reading from the N-terminus, the 149-residue chain is Transcription antitermination protein NusB (149 aa).

Belongs to the NusB family.

In terms of biological role, involved in transcription antitermination. Required for transcription of ribosomal RNA (rRNA) genes. Binds specifically to the boxA antiterminator sequence of the ribosomal RNA (rrn) operons. This chain is Transcription antitermination protein NusB, found in Caulobacter vibrioides (strain ATCC 19089 / CIP 103742 / CB 15) (Caulobacter crescentus).